The following is a 486-amino-acid chain: Glutamyl-tRNA(Gln) amidotransferase subunit A (486 aa).

Residues Lys79 and Ser154 each act as charge relay system in the active site. The Acyl-ester intermediate role is filled by Ser178.

It belongs to the amidase family. GatA subfamily. Heterotrimer of A, B and C subunits.

It carries out the reaction L-glutamyl-tRNA(Gln) + L-glutamine + ATP + H2O = L-glutaminyl-tRNA(Gln) + L-glutamate + ADP + phosphate + H(+). Its function is as follows. Allows the formation of correctly charged Gln-tRNA(Gln) through the transamidation of misacylated Glu-tRNA(Gln) in organisms which lack glutaminyl-tRNA synthetase. The reaction takes place in the presence of glutamine and ATP through an activated gamma-phospho-Glu-tRNA(Gln). The chain is Glutamyl-tRNA(Gln) amidotransferase subunit A from Dehalococcoides mccartyi (strain ATCC BAA-2100 / JCM 16839 / KCTC 5957 / BAV1).